Here is a 394-residue protein sequence, read N- to C-terminus: Enoyl-[acyl-carrier-protein] reductase [NADH] (394 aa).

Residues 48–53 (GASTGY), 74–75 (YE), 111–112 (DA), and 139–140 (LA) each bind NAD(+). Tyrosine 225 is a binding site for substrate. Residue tyrosine 235 is the Proton donor of the active site. NAD(+) contacts are provided by residues lysine 244 and 273-275 (LVT).

Belongs to the TER reductase family. Monomer.

The catalysed reaction is a 2,3-saturated acyl-[ACP] + NAD(+) = a (2E)-enoyl-[ACP] + NADH + H(+). It participates in lipid metabolism; fatty acid biosynthesis. In terms of biological role, involved in the final reduction of the elongation cycle of fatty acid synthesis (FAS II). Catalyzes the reduction of a carbon-carbon double bond in an enoyl moiety that is covalently linked to an acyl carrier protein (ACP). In Opitutus terrae (strain DSM 11246 / JCM 15787 / PB90-1), this protein is Enoyl-[acyl-carrier-protein] reductase [NADH].